The following is a 284-amino-acid chain: Homeobox-leucine zipper protein HAT4 (284 aa).

Polar residues predominate over residues 48-59 (ESFTSSVPNSDS). The interval 48–132 (ESFTSSVPNS…DGDNSRKKLR (85 aa)) is disordered. A compositionally biased stretch (low complexity) spans 89–100 (VSSPNSTVSSST). The homeobox DNA-binding region spans 126–185 (NSRKKLRLSKDQSAILEETFKDHSTLNPKQKQALAKQLGLRARQVEVWFQNRRARTKLKQ). Residues 193-214 (LRRCCENLTEENRRLQKEVTEL) are leucine-zipper.

This sequence belongs to the HD-ZIP homeobox family. Class II subfamily. Interacts with DNA as homodimer. Predominantly expressed in leaves and stems.

Its subcellular location is the nucleus. In terms of biological role, probable transcription factor involved in the negative regulation of cell elongation and specific cell proliferation processes such as lateral root formation and secondary growth of the vascular system. Acts as a mediator of the red/far-red light effects on leaf cell expansion in the shading response. Binds to the DNA sequence 5'-CAAT[GC]ATTG-3'. Negatively regulates its own expression. This is Homeobox-leucine zipper protein HAT4 (HAT4) from Arabidopsis thaliana (Mouse-ear cress).